A 213-amino-acid chain; its full sequence is Large ribosomal subunit protein uL3 (213 aa).

This sequence belongs to the universal ribosomal protein uL3 family. Part of the 50S ribosomal subunit. Forms a cluster with proteins L14 and L19.

Its function is as follows. One of the primary rRNA binding proteins, it binds directly near the 3'-end of the 23S rRNA, where it nucleates assembly of the 50S subunit. This chain is Large ribosomal subunit protein uL3, found in Kosmotoga olearia (strain ATCC BAA-1733 / DSM 21960 / TBF 19.5.1).